Consider the following 341-residue polypeptide: tRNA N6-adenosine threonylcarbamoyltransferase (341 aa).

The Fe cation site is built by histidine 115 and histidine 119. Residues 138–142, aspartate 171, glycine 184, and asparagine 276 contribute to the substrate site; that span reads LVSGG. Aspartate 304 lines the Fe cation pocket.

It belongs to the KAE1 / TsaD family. The cofactor is Fe(2+).

The protein localises to the cytoplasm. It carries out the reaction L-threonylcarbamoyladenylate + adenosine(37) in tRNA = N(6)-L-threonylcarbamoyladenosine(37) in tRNA + AMP + H(+). Functionally, required for the formation of a threonylcarbamoyl group on adenosine at position 37 (t(6)A37) in tRNAs that read codons beginning with adenine. Is involved in the transfer of the threonylcarbamoyl moiety of threonylcarbamoyl-AMP (TC-AMP) to the N6 group of A37, together with TsaE and TsaB. TsaD likely plays a direct catalytic role in this reaction. The protein is tRNA N6-adenosine threonylcarbamoyltransferase of Stenotrophomonas maltophilia (strain R551-3).